The chain runs to 302 residues: 33 kDa chaperonin (302 aa).

2 disulfide bridges follow: Cys-234/Cys-236 and Cys-267/Cys-270.

It belongs to the HSP33 family. In terms of processing, under oxidizing conditions two disulfide bonds are formed involving the reactive cysteines. Under reducing conditions zinc is bound to the reactive cysteines and the protein is inactive.

It localises to the cytoplasm. Functionally, redox regulated molecular chaperone. Protects both thermally unfolding and oxidatively damaged proteins from irreversible aggregation. Plays an important role in the bacterial defense system toward oxidative stress. This chain is 33 kDa chaperonin, found in Neisseria meningitidis serogroup A / serotype 4A (strain DSM 15465 / Z2491).